The sequence spans 343 residues: Holliday junction branch migration complex subunit RuvB (343 aa).

A large ATPase domain (RuvB-L) region spans residues 1 to 182; the sequence is MTDPIPLHTP…FGIPVRLNFY (182 aa). Residues Leu-21, Arg-22, Gly-63, Lys-66, Thr-67, Thr-68, Arg-172, Tyr-182, and Arg-219 each coordinate ATP. Thr-67 serves as a coordination point for Mg(2+). Residues 183–253 form a small ATPAse domain (RuvB-S) region; sequence TEEELEKVVT…IADAALTRLE (71 aa). The interval 256–343 is head domain (RuvB-H); the sequence is GLGLDAMDRR…SQTGLFDGKS (88 aa). Positions 292, 311, and 316 each coordinate DNA.

This sequence belongs to the RuvB family. Homohexamer. Forms an RuvA(8)-RuvB(12)-Holliday junction (HJ) complex. HJ DNA is sandwiched between 2 RuvA tetramers; dsDNA enters through RuvA and exits via RuvB. An RuvB hexamer assembles on each DNA strand where it exits the tetramer. Each RuvB hexamer is contacted by two RuvA subunits (via domain III) on 2 adjacent RuvB subunits; this complex drives branch migration. In the full resolvosome a probable DNA-RuvA(4)-RuvB(12)-RuvC(2) complex forms which resolves the HJ.

It is found in the cytoplasm. The catalysed reaction is ATP + H2O = ADP + phosphate + H(+). Functionally, the RuvA-RuvB-RuvC complex processes Holliday junction (HJ) DNA during genetic recombination and DNA repair, while the RuvA-RuvB complex plays an important role in the rescue of blocked DNA replication forks via replication fork reversal (RFR). RuvA specifically binds to HJ cruciform DNA, conferring on it an open structure. The RuvB hexamer acts as an ATP-dependent pump, pulling dsDNA into and through the RuvAB complex. RuvB forms 2 homohexamers on either side of HJ DNA bound by 1 or 2 RuvA tetramers; 4 subunits per hexamer contact DNA at a time. Coordinated motions by a converter formed by DNA-disengaged RuvB subunits stimulates ATP hydrolysis and nucleotide exchange. Immobilization of the converter enables RuvB to convert the ATP-contained energy into a lever motion, pulling 2 nucleotides of DNA out of the RuvA tetramer per ATP hydrolyzed, thus driving DNA branch migration. The RuvB motors rotate together with the DNA substrate, which together with the progressing nucleotide cycle form the mechanistic basis for DNA recombination by continuous HJ branch migration. Branch migration allows RuvC to scan DNA until it finds its consensus sequence, where it cleaves and resolves cruciform DNA. The polypeptide is Holliday junction branch migration complex subunit RuvB (Erythrobacter litoralis (strain HTCC2594)).